The primary structure comprises 449 residues: Probable glycine dehydrogenase (decarboxylating) subunit 1 (449 aa).

This sequence belongs to the GcvP family. N-terminal subunit subfamily. The glycine cleavage system is composed of four proteins: P, T, L and H. In this organism, the P 'protein' is a heterodimer of two subunits.

The catalysed reaction is N(6)-[(R)-lipoyl]-L-lysyl-[glycine-cleavage complex H protein] + glycine + H(+) = N(6)-[(R)-S(8)-aminomethyldihydrolipoyl]-L-lysyl-[glycine-cleavage complex H protein] + CO2. The glycine cleavage system catalyzes the degradation of glycine. The P protein binds the alpha-amino group of glycine through its pyridoxal phosphate cofactor; CO(2) is released and the remaining methylamine moiety is then transferred to the lipoamide cofactor of the H protein. The polypeptide is Probable glycine dehydrogenase (decarboxylating) subunit 1 (Oceanobacillus iheyensis (strain DSM 14371 / CIP 107618 / JCM 11309 / KCTC 3954 / HTE831)).